We begin with the raw amino-acid sequence, 313 residues long: Methionyl-tRNA formyltransferase (313 aa).

112 to 115 (SLLP) contacts (6S)-5,6,7,8-tetrahydrofolate.

This sequence belongs to the Fmt family.

The enzyme catalyses L-methionyl-tRNA(fMet) + (6R)-10-formyltetrahydrofolate = N-formyl-L-methionyl-tRNA(fMet) + (6S)-5,6,7,8-tetrahydrofolate + H(+). In terms of biological role, attaches a formyl group to the free amino group of methionyl-tRNA(fMet). The formyl group appears to play a dual role in the initiator identity of N-formylmethionyl-tRNA by promoting its recognition by IF2 and preventing the misappropriation of this tRNA by the elongation apparatus. The polypeptide is Methionyl-tRNA formyltransferase (Roseiflexus castenholzii (strain DSM 13941 / HLO8)).